The following is a 427-amino-acid chain: Probable purple acid phosphatase 20 (427 aa).

Positions 1–21 (MVKVLGLVAILLIVLAGNVLS) are cleaved as a signal peptide. A glycan (N-linked (GlcNAc...) asparagine) is linked at Asn85. Fe cation contacts are provided by Asp147, Asp174, and Tyr177. Position 174 (Asp174) interacts with Zn(2+). Residues Asn207 and His291 each coordinate Zn(2+). Asn207 provides a ligand contact to substrate. His301 functions as the Proton donor in the catalytic mechanism. His330 contacts Zn(2+). A substrate-binding site is contributed by 330–332 (HVH). His332 contacts Fe cation. An N-linked (GlcNAc...) asparagine glycan is attached at Asn392.

Belongs to the metallophosphoesterase superfamily. Purple acid phosphatase family. In terms of assembly, homodimer. The cofactor is Fe cation. It depends on Zn(2+) as a cofactor. Expressed flowers and siliques.

The protein localises to the secreted. The catalysed reaction is a phosphate monoester + H2O = an alcohol + phosphate. The polypeptide is Probable purple acid phosphatase 20 (PAP20) (Arabidopsis thaliana (Mouse-ear cress)).